Consider the following 90-residue polypeptide: Acylphosphatase (90 aa).

The 87-residue stretch at Arg4–Tyr90 folds into the Acylphosphatase-like domain. Residues Arg19 and Asn37 contribute to the active site.

Belongs to the acylphosphatase family.

It catalyses the reaction an acyl phosphate + H2O = a carboxylate + phosphate + H(+). The sequence is that of Acylphosphatase (acyP) from Sulfurisphaera tokodaii (strain DSM 16993 / JCM 10545 / NBRC 100140 / 7) (Sulfolobus tokodaii).